We begin with the raw amino-acid sequence, 349 residues long: Green-sensitive opsin-1 (349 aa).

Residues 1–36 (MNGTEGKNFYVPMSNRTGLVRSPFEYPQYYLAEPWQ) are Extracellular-facing. Residues Asn-2 and Asn-15 are each glycosylated (N-linked (GlcNAc...) asparagine). A helical membrane pass occupies residues 37 to 61 (FKILALYLFFLMSMGLPINGLTLVV). Over 62 to 73 (TAQHKKLRQPLN) the chain is Cytoplasmic. The helical transmembrane segment at 74 to 99 (FILVNLAVAGTIMVCFGFTVTFYTAI) threads the bilayer. The Extracellular segment spans residues 100–113 (NGYFVLGPTGCAVE). Cys-110 and Cys-187 form a disulfide bridge. A helical membrane pass occupies residues 114 to 133 (GFMATLGGEVALWSLVVLAI). At 134 to 152 (ERYIVVCKPMGSFKFSSSH) the chain is on the cytoplasmic side. A helical transmembrane segment spans residues 153–176 (AFAGIAFTWVMALACAAPPLFGWS). Over 177–202 (RYIPEGMQCSCGPDYYTLNPDYNNES) the chain is Extracellular. Residues 203 to 230 (YVIYMFVCHFILPVAVIFFTYGRLVCTV) form a helical membrane-spanning segment. Over 231-252 (KAAAAQQQDSASTQKAEREVTK) the chain is Cytoplasmic. Residues 253–276 (MVILMVFGFLIAWTPYATVAAWIF) traverse the membrane as a helical segment. Residues 277–284 (FNKGADFS) lie on the Extracellular side of the membrane. Residues 285–309 (AKFMAIPAFFSKSSALYNPVIYVLL) traverse the membrane as a helical segment. Lys-296 is modified (N6-(retinylidene)lysine). Residues 310–349 (NKQFRNCMLTTIFCGKNPLGDDESSTVSTSKTEVSSVSPA) are Cytoplasmic-facing. Residues 329-349 (GDDESSTVSTSKTEVSSVSPA) are disordered. The span at 334–349 (STVSTSKTEVSSVSPA) shows a compositional bias: low complexity.

Belongs to the G-protein coupled receptor 1 family. Opsin subfamily. Phosphorylated on some or all of the serine and threonine residues present in the C-terminal region. In terms of tissue distribution, the color pigments are found in the cone photoreceptor cells.

The protein resides in the membrane. Visual pigments are the light-absorbing molecules that mediate vision. They consist of an apoprotein, opsin, covalently linked to cis-retinal. This Carassius auratus (Goldfish) protein is Green-sensitive opsin-1.